A 505-amino-acid polypeptide reads, in one-letter code: Maturase K (505 aa).

It belongs to the intron maturase 2 family. MatK subfamily.

It is found in the plastid. It localises to the chloroplast. Usually encoded in the trnK tRNA gene intron. Probably assists in splicing its own and other chloroplast group II introns. This Kunzea capitata (Pink kunzea) protein is Maturase K.